A 275-amino-acid polypeptide reads, in one-letter code: Ribosomal RNA small subunit methyltransferase A (275 aa).

Positions 19, 21, 46, 71, 94, and 117 each coordinate S-adenosyl-L-methionine.

Belongs to the class I-like SAM-binding methyltransferase superfamily. rRNA adenine N(6)-methyltransferase family. RsmA subfamily.

The protein resides in the cytoplasm. The catalysed reaction is adenosine(1518)/adenosine(1519) in 16S rRNA + 4 S-adenosyl-L-methionine = N(6)-dimethyladenosine(1518)/N(6)-dimethyladenosine(1519) in 16S rRNA + 4 S-adenosyl-L-homocysteine + 4 H(+). Its function is as follows. Specifically dimethylates two adjacent adenosines (A1518 and A1519) in the loop of a conserved hairpin near the 3'-end of 16S rRNA in the 30S particle. May play a critical role in biogenesis of 30S subunits. This is Ribosomal RNA small subunit methyltransferase A from Burkholderia multivorans (strain ATCC 17616 / 249).